A 146-amino-acid polypeptide reads, in one-letter code: UPF0178 protein BC_3040 (146 aa).

This sequence belongs to the UPF0178 family.

The chain is UPF0178 protein BC_3040 from Bacillus cereus (strain ATCC 14579 / DSM 31 / CCUG 7414 / JCM 2152 / NBRC 15305 / NCIMB 9373 / NCTC 2599 / NRRL B-3711).